Here is a 344-residue protein sequence, read N- to C-terminus: Phenylalanine--tRNA ligase alpha subunit (344 aa).

Glutamate 256 is a binding site for Mg(2+).

Belongs to the class-II aminoacyl-tRNA synthetase family. Phe-tRNA synthetase alpha subunit type 1 subfamily. In terms of assembly, tetramer of two alpha and two beta subunits. The cofactor is Mg(2+).

Its subcellular location is the cytoplasm. The enzyme catalyses tRNA(Phe) + L-phenylalanine + ATP = L-phenylalanyl-tRNA(Phe) + AMP + diphosphate + H(+). This Bacillus anthracis (strain CDC 684 / NRRL 3495) protein is Phenylalanine--tRNA ligase alpha subunit.